The chain runs to 164 residues: SsrA-binding protein (164 aa).

Residues 141 to 164 (KLHDKRQDEKQKSIKKEINSALKR) form a disordered region. Positions 145-158 (KRQDEKQKSIKKEI) are enriched in basic and acidic residues.

It belongs to the SmpB family.

The protein resides in the cytoplasm. Required for rescue of stalled ribosomes mediated by trans-translation. Binds to transfer-messenger RNA (tmRNA), required for stable association of tmRNA with ribosomes. tmRNA and SmpB together mimic tRNA shape, replacing the anticodon stem-loop with SmpB. tmRNA is encoded by the ssrA gene; the 2 termini fold to resemble tRNA(Ala) and it encodes a 'tag peptide', a short internal open reading frame. During trans-translation Ala-aminoacylated tmRNA acts like a tRNA, entering the A-site of stalled ribosomes, displacing the stalled mRNA. The ribosome then switches to translate the ORF on the tmRNA; the nascent peptide is terminated with the 'tag peptide' encoded by the tmRNA and targeted for degradation. The ribosome is freed to recommence translation, which seems to be the essential function of trans-translation. The protein is SsrA-binding protein of Prochlorococcus marinus (strain MIT 9301).